Consider the following 333-residue polypeptide: 5-formaminoimidazole-4-carboxamide-1-(beta)-D-ribofuranosyl 5'-monophosphate synthetase (333 aa).

Positions 10 and 70 each coordinate 5-amino-1-(5-phospho-beta-D-ribosyl)imidazole-4-carboxamide. One can recognise an ATP-grasp domain in the interval 91-324 (KEVLKWESDR…IAREIKIAIE (234 aa)). Residues 121 to 181 (PDDI…VPIY) and glutamate 203 each bind ATP. Asparagine 231 is a binding site for 5-amino-1-(5-phospho-beta-D-ribosyl)imidazole-4-carboxamide. The Mg(2+) site is built by glutamate 269 and glutamate 282.

The protein belongs to the phosphohexose mutase family. Requires Mg(2+) as cofactor. The cofactor is Mn(2+).

It catalyses the reaction 5-amino-1-(5-phospho-beta-D-ribosyl)imidazole-4-carboxamide + formate + ATP = 5-formamido-1-(5-phospho-D-ribosyl)imidazole-4-carboxamide + ADP + phosphate. Its pathway is purine metabolism; IMP biosynthesis via de novo pathway; 5-formamido-1-(5-phospho-D-ribosyl)imidazole-4-carboxamide from 5-amino-1-(5-phospho-D-ribosyl)imidazole-4-carboxamide (formate route): step 1/1. Catalyzes the ATP- and formate-dependent formylation of 5-aminoimidazole-4-carboxamide-1-beta-d-ribofuranosyl 5'-monophosphate (AICAR) to 5-formaminoimidazole-4-carboxamide-1-beta-d-ribofuranosyl 5'-monophosphate (FAICAR) in the absence of folates. The polypeptide is 5-formaminoimidazole-4-carboxamide-1-(beta)-D-ribofuranosyl 5'-monophosphate synthetase (Pyrococcus horikoshii (strain ATCC 700860 / DSM 12428 / JCM 9974 / NBRC 100139 / OT-3)).